The sequence spans 738 residues: Coiled-coil domain-containing protein 142 (738 aa).

Residues 1 to 34 (MARASSSSGPLPPLANVPSSWAQPVGAGEERDEG) are disordered. Residues 69 to 92 (ALQRLRATLLRLHREREQLLRARD) adopt a coiled-coil conformation. Positions 682–704 (LSTLGGGGRGGGGGGGPGPSPEA) are disordered. Gly residues predominate over residues 685–698 (LGGGGRGGGGGGGP).

The chain is Coiled-coil domain-containing protein 142 (Ccdc142) from Mus musculus (Mouse).